The sequence spans 644 residues: Sodium/hydrogen exchanger 9 (644 aa).

The Lumenal segment spans residues 1 to 20 (MERQRRFMSEKDEYQFQHQG). A helical membrane pass occupies residues 21 to 41 (AVELLVFNFLLILTILTIWLF). The Cytoplasmic segment spans residues 42-45 (KNHR). Residues 46 to 66 (FRFLHETGGAMVYGLIMGLIL) form a helical membrane-spanning segment. Residues 67-126 (RYATAPTDIESGTVYDCGKLAFSPSTLLINITDQVYEYKYKREISQHNINPHLGNAILEK) are Lumenal-facing. The helical transmembrane segment at 127–147 (MTFDPEIFFNVLLPPIIFHAG) threads the bilayer. Residues 148-164 (YSLKKRHFFQNLGSILT) are Cytoplasmic-facing. Residues 165 to 185 (YAFLGTAISCIVIGLIMYGFV) traverse the membrane as a helical segment. Topologically, residues 186–203 (KAMVYAGQLKNGDFHFTD) are lumenal. The helical transmembrane segment at 204-224 (CLFFGSLMSATDPVTVLAIFH) threads the bilayer. Residues 225–235 (ELHVDPDLYTL) lie on the Cytoplasmic side of the membrane. Residues 236–256 (LFGESVLNDAVAIVLTYSISI) form a helical membrane-spanning segment. Over 257 to 277 (YSPKENPNAFDAAAFFQSVGN) the chain is Lumenal. Residues 278–298 (FLGIFAGSFAMGSAYAVVTAL) form a helical membrane-spanning segment. At 299–301 (LTK) the chain is on the cytoplasmic side. The next 2 helical transmembrane spans lie at 302-322 (FTKL…LSWS) and 323-343 (AFLS…FCGV). Topologically, residues 344–364 (TQAHYTYNNLSLDSKMRTKQL) are cytoplasmic. The helical transmembrane segment at 365–385 (FEFMNFLAENVIFCYMGLALF) threads the bilayer. Residue threonine 386 is a topological domain, lumenal. The helical transmembrane segment at 387–407 (FQNHIFNALFILGAFLAIFVA) threads the bilayer. Over 408-429 (RACNIYPLSFLLNLGRKHKIPW) the chain is Cytoplasmic. Residues 430–450 (NFQHMMMFSGLRGAIAFALAI) form a helical membrane-spanning segment. Over 451 to 465 (RDTESQPKQMMFSTT) the chain is Lumenal. The chain crosses the membrane as a helical span at residues 466–486 (LLLVFFTVWVFGGGTTPMLTW). The Cytoplasmic segment spans residues 487–644 (LQIRVGVDLD…EQTPGQSQLN (158 aa)). The disordered stretch occupies residues 593 to 622 (QAASPCSPPTRLGLDQKAAPQTPGKENIYE).

Belongs to the monovalent cation:proton antiporter 1 (CPA1) transporter (TC 2.A.36) family. In terms of assembly, homodimer; phosphatidylinositol-4,5-bisphosphate (PIP2) and phosphatidylinositol 3,4,5-trisphosphate (PIP3) could be involved in the dimer stabilization. Interacts (via the C-terminus) with RACK1. Interacts with CHP1.

The protein resides in the late endosome membrane. It is found in the early endosome membrane. Its subcellular location is the recycling endosome membrane. It localises to the cell membrane. The protein localises to the cytoplasmic vesicle. The protein resides in the phagosome membrane. It catalyses the reaction Na(+)(in) + H(+)(out) = Na(+)(out) + H(+)(in). It carries out the reaction K(+)(in) + H(+)(out) = K(+)(out) + H(+)(in). Endosomal Na(+), K(+)/H(+) antiporter. Mediates the electroneutral exchange of endosomal luminal H(+) for a cytosolic Na(+) or K(+). By facilitating proton efflux, SLC9A9 counteracts the acidity generated by vacuolar (V)-ATPase, thereby limiting luminal acidification. Regulates organellar pH and consequently, endosome maturation and endocytic trafficking of plasma membrane receptors and neurotransporters. Promotes the recycling of transferrin receptors back to the cell surface to facilitate additional iron uptake in the brain. Regulates synaptic transmission by regulating the luminal pH of axonal endosomes. Regulates phagosome lumenal pH, thus affecting phagosome maturation, and consequently, microbicidal activity in macrophages. Can also be active at the cell surface of specialized cells, e.g., in the inner ear hair bundles uses the high K(+) of the endolymph to regulate intracelular pH. The protein is Sodium/hydrogen exchanger 9 (SLC9A9) of Equus caballus (Horse).